Consider the following 491-residue polypeptide: Xaa-Pro aminopeptidase 1 (491 aa).

The segment at 1 to 32 (MAEELTPENPAIPETPEETEEPIKQRKNGLYP) is disordered. Residues D308, D320, H403, E434, and E458 each coordinate Mn(2+).

This sequence belongs to the peptidase M24B family. As to quaternary structure, homodimer. Mn(2+) serves as cofactor.

The catalysed reaction is Release of any N-terminal amino acid, including proline, that is linked to proline, even from a dipeptide or tripeptide.. The protein is Xaa-Pro aminopeptidase 1 (pepPI) of Streptomyces coelicolor (strain ATCC BAA-471 / A3(2) / M145).